The following is a 65-amino-acid chain: Alpha-toxin Lqq4 (65 aa).

In terms of domain architecture, LCN-type CS-alpha/beta spans 3-65 (RDAYIADDKN…VPIRIPGKCR (63 aa)). The segment at 9–13 (DDKNC) is specificity module, loop 1. Cystine bridges form between cysteine 13–cysteine 64, cysteine 17–cysteine 37, cysteine 23–cysteine 47, and cysteine 27–cysteine 49. 2 specificity module, loop regions span residues 40 to 44 (LGKYG) and 57 to 65 (PIRIPGKCR). Arginine 65 is modified (arginine amide).

Belongs to the long (4 C-C) scorpion toxin superfamily. Sodium channel inhibitor family. Alpha subfamily. In terms of processing, the recombinant toxin which is used for activity tests is not amidated. However, C-terminal amidation does not appear to play an important role in activity, since the non-amidated recombinant toxin and the native toxin (which is amidated) show similar activities on all sodium channels tested. As to expression, expressed by the venom gland.

The protein localises to the secreted. In terms of biological role, alpha toxins bind voltage-independently at site-3 of sodium channels (Nav) and inhibit the inactivation of the activated channels, thereby blocking neuronal transmission. Both native and recombinant (non-amidated) toxins inhibit inactivation of Nav1.2/SCN2A (EC(50)=31.2-36.6 nM), Nav1.6/SCN8A (EC(50)=6.9-8.9 nM), and Nav1.7/SCN9A (EC(50)=182.0-260.1 nM). The polypeptide is Alpha-toxin Lqq4 (Leiurus quinquestriatus quinquestriatus (Egyptian scorpion)).